A 137-amino-acid chain; its full sequence is Small ribosomal subunit protein uS12 (137 aa).

2 disordered regions span residues 1-21 and 34-57; these read MPTI…KSDS and VHTK…TPKK. A 3-methylthioaspartic acid modification is found at D102.

Belongs to the universal ribosomal protein uS12 family. Part of the 30S ribosomal subunit. Contacts proteins S8 and S17. May interact with IF1 in the 30S initiation complex.

In terms of biological role, with S4 and S5 plays an important role in translational accuracy. Its function is as follows. Interacts with and stabilizes bases of the 16S rRNA that are involved in tRNA selection in the A site and with the mRNA backbone. Located at the interface of the 30S and 50S subunits, it traverses the body of the 30S subunit contacting proteins on the other side and probably holding the rRNA structure together. The combined cluster of proteins S8, S12 and S17 appears to hold together the shoulder and platform of the 30S subunit. This Streptococcus uberis (strain ATCC BAA-854 / 0140J) protein is Small ribosomal subunit protein uS12.